The sequence spans 114 residues: Prefoldin subunit 6 (114 aa).

Ser2 is subject to N-acetylserine.

This sequence belongs to the prefoldin subunit beta family. In terms of assembly, heterohexamer of two PFD-alpha type and four PFD-beta type subunits.

Its subcellular location is the nucleus. Binds specifically to cytosolic chaperonin (c-CPN) and transfers target proteins to it. Binds to nascent polypeptide chain and promotes folding in an environment in which there are many competing pathways for nonnative proteins. The protein is Prefoldin subunit 6 (YKE2) of Saccharomyces cerevisiae (strain ATCC 204508 / S288c) (Baker's yeast).